The following is a 222-amino-acid chain: Embryonic stem cell-related gene protein (222 aa).

Expressed only in fetal ovary and in undifferentiated ES cells.

The protein resides in the nucleus. The protein is Embryonic stem cell-related gene protein (ESRG) of Homo sapiens (Human).